A 133-amino-acid polypeptide reads, in one-letter code: Holo-[acyl-carrier-protein] synthase (133 aa).

Positions 8 and 57 each coordinate Mg(2+).

The protein belongs to the P-Pant transferase superfamily. AcpS family. The cofactor is Mg(2+).

Its subcellular location is the cytoplasm. The catalysed reaction is apo-[ACP] + CoA = holo-[ACP] + adenosine 3',5'-bisphosphate + H(+). Transfers the 4'-phosphopantetheine moiety from coenzyme A to a Ser of acyl-carrier-protein. The chain is Holo-[acyl-carrier-protein] synthase from Bartonella tribocorum (strain CIP 105476 / IBS 506).